We begin with the raw amino-acid sequence, 453 residues long: Ribulose bisphosphate carboxylase large chain (453 aa).

Residues 1-2 (MS) constitute a propeptide that is removed on maturation. N-acetylproline is present on Pro3. Residue Lys14 is modified to N6,N6,N6-trimethyllysine. Residues Asn123 and Thr173 each contribute to the substrate site. Lys175 (proton acceptor) is an active-site residue. Position 177 (Lys177) interacts with substrate. 3 residues coordinate Mg(2+): Lys201, Asp203, and Glu204. Lys201 carries the post-translational modification N6-carboxylysine. His294 serves as the catalytic Proton acceptor. The substrate site is built by Arg295, His327, and Ser379.

This sequence belongs to the RuBisCO large chain family. Type I subfamily. In terms of assembly, heterohexadecamer of 8 large chains and 8 small chains; disulfide-linked. The disulfide link is formed within the large subunit homodimers. Mg(2+) is required as a cofactor. Post-translationally, the disulfide bond which can form in the large chain dimeric partners within the hexadecamer appears to be associated with oxidative stress and protein turnover.

Its subcellular location is the plastid. It localises to the chloroplast. The catalysed reaction is 2 (2R)-3-phosphoglycerate + 2 H(+) = D-ribulose 1,5-bisphosphate + CO2 + H2O. It catalyses the reaction D-ribulose 1,5-bisphosphate + O2 = 2-phosphoglycolate + (2R)-3-phosphoglycerate + 2 H(+). Functionally, ruBisCO catalyzes two reactions: the carboxylation of D-ribulose 1,5-bisphosphate, the primary event in carbon dioxide fixation, as well as the oxidative fragmentation of the pentose substrate in the photorespiration process. Both reactions occur simultaneously and in competition at the same active site. This Phuopsis stylosa (Caucasian crosswort) protein is Ribulose bisphosphate carboxylase large chain.